A 56-amino-acid chain; its full sequence is UPF0391 membrane protein Jann_3570 (56 aa).

2 consecutive transmembrane segments (helical) span residues 4–24 (WAVT…GGIA) and 29–48 (GIAQ…SLVA).

Belongs to the UPF0391 family.

It localises to the cell membrane. The chain is UPF0391 membrane protein Jann_3570 from Jannaschia sp. (strain CCS1).